The chain runs to 304 residues: Spore coat protein CotB (304 aa).

The protein localises to the spore coat. The protein resides in the spore. Its subcellular location is the perispore. Functionally, contributes to the formation of thick-exosporium spores. This is Spore coat protein CotB from Clostridioides difficile (strain 630) (Peptoclostridium difficile).